We begin with the raw amino-acid sequence, 191 residues long: MIGSITGNVEEIRDSYIILNVGNIGYIIYVSHKVLQTCKVGDNIKLYIETYVNRDNITQLYGFLNRQEQDYFKMLVTINGINYKTALSILSKLSPEQIFSAVVNNDKIAFKGNGIGEKLAGRIITELQYKINKMPIEETFSIIENDDSLAALISLGYEKLKAFNVIQEIKSKTPDASTQEVIRKALQKLSQ.

A domain I region spans residues 1-64 (MIGSITGNVE…DNITQLYGFL (64 aa)). A domain II region spans residues 65–142 (NRQEQDYFKM…KMPIEETFSI (78 aa)). Residues 143 to 146 (IEND) form a flexible linker region. Positions 146–191 (DDSLAALISLGYEKLKAFNVIQEIKSKTPDASTQEVIRKALQKLSQ) are domain III.

It belongs to the RuvA family. Homotetramer. Forms an RuvA(8)-RuvB(12)-Holliday junction (HJ) complex. HJ DNA is sandwiched between 2 RuvA tetramers; dsDNA enters through RuvA and exits via RuvB. An RuvB hexamer assembles on each DNA strand where it exits the tetramer. Each RuvB hexamer is contacted by two RuvA subunits (via domain III) on 2 adjacent RuvB subunits; this complex drives branch migration. In the full resolvosome a probable DNA-RuvA(4)-RuvB(12)-RuvC(2) complex forms which resolves the HJ.

The protein localises to the cytoplasm. In terms of biological role, the RuvA-RuvB-RuvC complex processes Holliday junction (HJ) DNA during genetic recombination and DNA repair, while the RuvA-RuvB complex plays an important role in the rescue of blocked DNA replication forks via replication fork reversal (RFR). RuvA specifically binds to HJ cruciform DNA, conferring on it an open structure. The RuvB hexamer acts as an ATP-dependent pump, pulling dsDNA into and through the RuvAB complex. HJ branch migration allows RuvC to scan DNA until it finds its consensus sequence, where it cleaves and resolves the cruciform DNA. The protein is Holliday junction branch migration complex subunit RuvA of Ehrlichia ruminantium (strain Gardel).